The primary structure comprises 256 residues: Hypodermin-B (256 aa).

The first 22 residues, 1-22, serve as a signal peptide directing secretion; the sequence is MLKFVILVCSVACVFGAVVPGG. The propeptide at 23–30 is activation peptide; that stretch reads MLPQLDGR. A Peptidase S1 domain is found at 31 to 254; the sequence is IVGGFEADIE…VRSWITENAK (224 aa). A disulfide bridge connects residues C56 and C72. Residues H71 and D116 each act as charge relay system in the active site. 2 cysteine pairs are disulfide-bonded: C180–C197 and C206–C230. The active-site Charge relay system is S210.

This sequence belongs to the peptidase S1 family.

It localises to the secreted. Functionally, protease that shows preferential cleavage after Arg and Lys residues. This is Hypodermin-B from Hypoderma lineatum (Early cattle grub).